Here is a 300-residue protein sequence, read N- to C-terminus: Cation-efflux pump FieF (300 aa).

A run of 6 helical transmembrane segments spans residues 12–32 (AAIA…FAWW), 39–59 (ILAA…NLLV), 82–102 (AALA…LTGI), 114–134 (PGVG…LVSF), 151–171 (MLHY…LALS), and 172–192 (WYGW…YILY). Residues Asp-45 and Asp-49 each contribute to the Zn(2+) site. His-153 and Asp-157 together coordinate Zn(2+).

Belongs to the cation diffusion facilitator (CDF) transporter (TC 2.A.4) family. FieF subfamily. As to quaternary structure, homodimer.

The protein localises to the cell inner membrane. The enzyme catalyses Zn(2+)(in) + H(+)(out) = Zn(2+)(out) + H(+)(in). The catalysed reaction is Cd(2+)(in) + H(+)(out) = Cd(2+)(out) + H(+)(in). It catalyses the reaction Fe(2+)(in) + H(+)(out) = Fe(2+)(out) + H(+)(in). Functionally, divalent metal cation transporter which exports Zn(2+), Cd(2+) and possibly Fe(2+). May be involved in zinc and iron detoxification by efflux. This Escherichia fergusonii (strain ATCC 35469 / DSM 13698 / CCUG 18766 / IAM 14443 / JCM 21226 / LMG 7866 / NBRC 102419 / NCTC 12128 / CDC 0568-73) protein is Cation-efflux pump FieF.